Here is a 109-residue protein sequence, read N- to C-terminus: Nucleoid-associated protein Psyc_0793 (109 aa).

It belongs to the YbaB/EbfC family. As to quaternary structure, homodimer.

Its subcellular location is the cytoplasm. The protein localises to the nucleoid. Binds to DNA and alters its conformation. May be involved in regulation of gene expression, nucleoid organization and DNA protection. This Psychrobacter arcticus (strain DSM 17307 / VKM B-2377 / 273-4) protein is Nucleoid-associated protein Psyc_0793.